We begin with the raw amino-acid sequence, 367 residues long: o-succinylbenzoate synthase (367 aa).

K164 functions as the Proton donor in the catalytic mechanism. Positions 189, 214, and 239 each coordinate Mg(2+). The Proton acceptor role is filled by K263.

The protein belongs to the mandelate racemase/muconate lactonizing enzyme family. MenC type 2 subfamily. As to quaternary structure, homodimer. The cofactor is a divalent metal cation.

The catalysed reaction is (1R,6R)-6-hydroxy-2-succinyl-cyclohexa-2,4-diene-1-carboxylate = 2-succinylbenzoate + H2O. The protein operates within quinol/quinone metabolism; 1,4-dihydroxy-2-naphthoate biosynthesis; 1,4-dihydroxy-2-naphthoate from chorismate: step 4/7. It functions in the pathway quinol/quinone metabolism; menaquinone biosynthesis. In terms of biological role, converts 2-succinyl-6-hydroxy-2,4-cyclohexadiene-1-carboxylate (SHCHC) to 2-succinylbenzoate (OSB). Also acts as a N-succinylamino acid racemase (NSAR) that catalyzes the racemization of N-succinyl-L-phenylglycine. Since the gene is encoded in a menaquinone synthesis operon, OSB synthase is probably the physiological activity. A pathway that requires NSAR activity has not been identified in this species, so whether NSAR is also a biological activity is unknown. The sequence is that of o-succinylbenzoate synthase from Enterococcus faecalis (strain ATCC 700802 / V583).